The chain runs to 141 residues: Putative nickel-responsive regulator (141 aa).

Ni(2+) contacts are provided by His80, His91, His93, and Cys99.

This sequence belongs to the transcriptional regulatory CopG/NikR family. The cofactor is Ni(2+).

Functionally, transcriptional regulator. The polypeptide is Putative nickel-responsive regulator (Methanococcus maripaludis (strain DSM 14266 / JCM 13030 / NBRC 101832 / S2 / LL)).